The following is a 262-amino-acid chain: Sperm microtubule inner protein 6 (262 aa).

This sequence belongs to the SPMIP6 family. As to quaternary structure, microtubule inner protein component of sperm flagellar doublet microtubules. Interacts with alpha-tubulin.

The protein localises to the cytoplasm. It is found in the cytoskeleton. Its subcellular location is the nucleus. It localises to the mitochondrion. The protein resides in the flagellum axoneme. Its function is as follows. May participate in intramanchette transport and midpiece formation of the sperm tail. May play a potential role in somatic cell proliferation. This is Sperm microtubule inner protein 6 (SPMIP6) from Macaca fascicularis (Crab-eating macaque).